A 525-amino-acid polypeptide reads, in one-letter code: GMP synthase [glutamine-hydrolyzing] (525 aa).

Residues 9 to 207 (RILILDFGSQ…VRDICQCEAL (199 aa)) form the Glutamine amidotransferase type-1 domain. Cysteine 86 acts as the Nucleophile in catalysis. Residues histidine 181 and glutamate 183 contribute to the active site. A GMPS ATP-PPase domain is found at 208-400 (WTPAKIIDDA…LGLPYDMLYR (193 aa)). Residue 235 to 241 (SGGVDSS) participates in ATP binding.

As to quaternary structure, homodimer.

It catalyses the reaction XMP + L-glutamine + ATP + H2O = GMP + L-glutamate + AMP + diphosphate + 2 H(+). Its pathway is purine metabolism; GMP biosynthesis; GMP from XMP (L-Gln route): step 1/1. Its function is as follows. Catalyzes the synthesis of GMP from XMP. The protein is GMP synthase [glutamine-hydrolyzing] of Escherichia coli O139:H28 (strain E24377A / ETEC).